The chain runs to 4043 residues: Polyketide synthase-nonribosomal peptide synthetase (4043 aa).

Residues Ser-8–Ser-446 enclose the Ketosynthase family 3 (KS3) domain. Catalysis depends on for beta-ketoacyl synthase activity residues Cys-181, His-320, and His-366. The acyl transferase stretch occupies residues Val-557–Phe-877. Positions Asn-944–Ser-1078 are N-terminal hotdog fold. In terms of domain architecture, PKS/mFAS DH spans Asn-944–Ala-1246. The tract at residues Glu-945–Pro-1243 is dehydratase (DH) domain. His-976 serves as the catalytic Proton acceptor; for dehydratase activity. Residues Leu-1093–Ala-1246 form a C-terminal hotdog fold region. Asp-1154 (proton donor; for dehydratase activity) is an active-site residue. Residues Arg-1400–Asp-1585 form a methyltransferase (MT) domain region. Residues Thr-2115–Ile-2288 form a ketoreductase (KR)domain region. Positions Ser-2394 to Leu-2475 constitute a Carrier 1 domain. A peptidyl carrier protein region spans residues Ser-2395–Gln-2472. Ser-2435 is modified (O-(pantetheine 4'-phosphoryl)serine). Disordered stretches follow at residues Pro-2476–Arg-2575 and Glu-2587–Ile-2630. Polar residues-rich tracts occupy residues Pro-2494 to Asn-2512 and Ala-2520 to Lys-2534. A compositionally biased stretch (basic and acidic residues) spans Pro-2537–Val-2550. Residues Thr-2617–Ser-2627 show a composition bias toward low complexity. Residues Lys-2640–Pro-3069 form a condensation region. An adenylation region spans residues Glu-3102–Ile-3502. The Carrier 2 domain occupies Thr-3617–Glu-3697. Positions Ser-3622–Asp-3694 are thiolation. Ser-3657 is modified (O-(pantetheine 4'-phosphoryl)serine). The segment at Leu-3735 to Met-3954 is reductase-like.

In the C-terminal section; belongs to the NRP synthetase family.

It functions in the pathway mycotoxin biosynthesis. In terms of biological role, hybrid PKS-NRPS synthetase; part of the gene cluster that mediates the biosynthesis of the mycotoxins cytochalasins E and K. The hybrid PKS-NRPS synthetase ccsA and the enoyl reductase ccsC are responsible for fusion of phenylalanine with an octaketide backbone and subsequent release of the stable tetramic acid precursor. The polyketide synthase module (PKS) of the PKS-NRPS ccsA is responsible for the synthesis of the octaketide backbone. The downstream nonribosomal peptide synthetase (NRPS) amidates the carboxyl end of the octaketide with a phenylalanine. A reductase-like domain (R) at the C-terminus catalyzes the reductive release of the polyketide-amino acid intermediate. Because ccsA lacks a designated enoylreductase (ER) domain, the required activity is provided the enoyl reductase ccsC. Upon formation of the 11-membered carbocycle-fused perhydroisoindolone intermediate, a number of oxidative steps are required to afford the final cytochalasin E and K, including two hydroxylations at C17 and C18, one alcohol oxidation at C17, one epoxidation at C6 and C7 and two Baeyer-Villiger oxidations. The oxidative modification at C17, C18 and the C6-C7 epoxidation are likely to be catalyzed by the two cytochrome P450 oxygenases ccsD and ccsG. CcsD may be responsible for the epoxidation of the C6-C7 double bond. CcsG may be responsible for the successive oxidative modifications at C17 and C18. The double Baeyer-Villiger oxidations of ketocytochalasin to precytochalasin and cytochalasin Z(16) are among the final steps leading to cytochalasin E and K and are catalyzed by ccsB. The first oxygen insertion step follows that of the classic BVMO mechanism, generating the ester precytochalasin. Release of precytochalasin into an aqueous environment can generate the shunt product iso-precytochalasin through spontaneous isomerization. Alternatively, precytochalasin can undergo further oxidation by ccsB to yield the in-line carbonate-containing cytochalasin Z(16). Cytochalasin Z(16) is a precursor to cytochalasin E and cytochalasin K, whereas iso-precytochalasin is a precursor to cytochalasin Z(17) and rosellichalasin. The hydrolyase ccsE may catalyze hydrolysis of epoxide bond in cytochalasin E to afford cytochalasin K. The function of ccsF has not been assigned but it may play a role in post-PKS-NRPS biosynthetic step, resistance or transport of cytochalasins and related PKS-NRPS products. The protein is Polyketide synthase-nonribosomal peptide synthetase of Aspergillus clavatus (strain ATCC 1007 / CBS 513.65 / DSM 816 / NCTC 3887 / NRRL 1 / QM 1276 / 107).